Reading from the N-terminus, the 474-residue chain is MAGPWIITLLCGLLGATLVQANVYPPAVLNLGPEVIQKHLTQALKDHDATAILQELPLLRAMQDKSGSIPILDSFVHTVLRYIIWMKVTSANILQLDVQPSTYDQELVVRIPLDMVAGLNTPLIKTIVEFQMSTEVQALIRVERSKSGPAHLNLSDCSSNESTLRLSLLHKLSFVVNSLAKNVMNLLVPALPQIVKNHLCPVIQQAFDDMYEDFLRLTTAPIALSPGALEFGLLSPAIQDSNILLNLKAKLLDSQARVTNWFNNSATSLMETTPDRAPFSLTVRQDLVNAIVTTLVPKEELVILLRFVIPDVARQLQMDIKEINAEAANKLGPTQMLKIFTHSTPHIVLNEGSARAAQSVVLEVFPTNTDVRPFFSLGIEASYEAQFFTEDNRLMLNFNNVSIERIKLMISDIKLFDPEVLKDTLTKILEYTLLPNENGKLRTGVPMSMSKALGYEKAMWSVSKGALKLTPASS.

The N-terminal stretch at 1 to 21 (MAGPWIITLLCGLLGATLVQA) is a signal peptide. N-linked (GlcNAc...) asparagine glycosylation is found at Asn153, Asn160, Asn263, and Asn400. A disulfide bond links Cys157 and Cys200.

The protein belongs to the BPI/LBP/Plunc superfamily. Plunc family. In terms of tissue distribution, expressed in tongue, lung, thymus, and stomach. Expressed in epithelia of palate, anterior pharynx, trachea and upper bronchi. Expressed in distal tip of papillae in the anterior third of the tongue and in serous cells of von Ebner glands in the posterior third of the tongue. Expressed in columnar epithelium of the duodenum in embryonic gut at 16.5 dpc.

The protein localises to the secreted. May play a role in innate immunity in mouth, nose and lungs. Binds bacterial lipopolysaccharide (LPS) and modulates the cellular responses to LPS. May be involved in formation of the left-right axis in the node of the developing embryo. This is BPI fold-containing family B member 1 (Bpifb1) from Mus musculus (Mouse).